An 82-amino-acid chain; its full sequence is Host transcription reprogramming factor 10 (82 aa).

The N-terminal stretch at 1–19 (MQIFNMVSLVALFALGATA) is a signal peptide. Residues 57–81 (WVCHACNKQFTTPAALQKHKDTVVH) form a C2H2-type zinc finger.

It localises to the secreted. Its subcellular location is the host nucleus. In terms of biological role, probable secreted effector that translocates into the nuclei of host cells to reprogram the expression of targeted genes by binding on effector binding elements in rice. The chain is Host transcription reprogramming factor 10 from Pyricularia oryzae (strain 70-15 / ATCC MYA-4617 / FGSC 8958) (Rice blast fungus).